The following is a 195-amino-acid chain: MTYGLILALVFGYLLGSIPFGLLLTRAAGLGDVRKIGSGNIGATNVLRTGNKGLAAATLLLDALKGTAAVLIAGHFAPETAVWAGLGAFLGHLFPVWLGFKGGKGVATYLGVLIGLAWQVALIFAVIWLAMAFLFRYSSLAALTAAVIVPIALYFLSAPQIAVLFVVMSIIVFIKHRANISRLLAGTEGKIGAKG.

The next 6 helical transmembrane spans lie at 4-24 (GLIL…GLLL), 53-73 (GLAA…VLIA), 80-100 (TAVW…WLGF), 110-130 (LGVL…IWLA), 133-153 (FLFR…PIAL), and 154-174 (YFLS…IVFI).

The protein belongs to the PlsY family. Probably interacts with PlsX.

It localises to the cell inner membrane. The catalysed reaction is an acyl phosphate + sn-glycerol 3-phosphate = a 1-acyl-sn-glycero-3-phosphate + phosphate. The protein operates within lipid metabolism; phospholipid metabolism. Its function is as follows. Catalyzes the transfer of an acyl group from acyl-phosphate (acyl-PO(4)) to glycerol-3-phosphate (G3P) to form lysophosphatidic acid (LPA). This enzyme utilizes acyl-phosphate as fatty acyl donor, but not acyl-CoA or acyl-ACP. The protein is Glycerol-3-phosphate acyltransferase of Mesorhizobium japonicum (strain LMG 29417 / CECT 9101 / MAFF 303099) (Mesorhizobium loti (strain MAFF 303099)).